We begin with the raw amino-acid sequence, 142 residues long: Small heat shock protein IbpB (142 aa).

The region spanning 26–137 (TAEHQAFPPY…APQRIAISDR (112 aa)) is the sHSP domain.

The protein belongs to the small heat shock protein (HSP20) family. As to quaternary structure, homodimer. Forms homomultimers of about 100-150 subunits at optimal growth temperatures. Conformation changes to oligomers at high temperatures or high ionic concentrations. The decrease in size of the multimers is accompanied by an increase in chaperone activity.

It is found in the cytoplasm. Its function is as follows. Associates with aggregated proteins, together with IbpA, to stabilize and protect them from irreversible denaturation and extensive proteolysis during heat shock and oxidative stress. Aggregated proteins bound to the IbpAB complex are more efficiently refolded and reactivated by the ATP-dependent chaperone systems ClpB and DnaK/DnaJ/GrpE. Its activity is ATP-independent. The sequence is that of Small heat shock protein IbpB from Enterobacter sp. (strain 638).